The sequence spans 71 residues: 7.9 kDa protein (71 aa).

In Pseudomonas aeruginosa (Bacteriophage Pf3), this protein is 7.9 kDa protein.